A 166-amino-acid chain; its full sequence is Phosphopantetheine adenylyltransferase (166 aa).

Thr11 serves as a coordination point for substrate. Residues 11-12 (TF) and His19 each bind ATP. Positions 43, 79, and 93 each coordinate substrate. Residues Glu104 and 128–134 (LEPLNST) each bind ATP.

It belongs to the bacterial CoaD family. Homohexamer. Requires Mg(2+) as cofactor.

The protein resides in the cytoplasm. It catalyses the reaction (R)-4'-phosphopantetheine + ATP + H(+) = 3'-dephospho-CoA + diphosphate. Its pathway is cofactor biosynthesis; coenzyme A biosynthesis; CoA from (R)-pantothenate: step 4/5. Reversibly transfers an adenylyl group from ATP to 4'-phosphopantetheine, yielding dephospho-CoA (dPCoA) and pyrophosphate. This chain is Phosphopantetheine adenylyltransferase, found in Lactococcus lactis subsp. cremoris (strain MG1363).